We begin with the raw amino-acid sequence, 516 residues long: MSDAQVAKTDVVLVGAGIMSATLSALIKLLEPNWSITLIERLDGAAAESSDPWNNAGTGHSALCELNYTPEGPGGSIDITKAVHVNEQFQVSRQFWTYAVENGVLPDVRNFINPIPHVSFVSGARNVEYLRARYDALVPNPLFATMEYIDDRDEFARRLPFMADKRDFREPVALNWSQDGTDIDFGSLSRQLIGYTAQRGMTTLFGHEVRDLDKQSDGSWSVKVVNRRTGAKRKLNAKFVFVGAGGGALPLLQKAGIEEAKGFGGFPVGGQWLRTGNPELTARHQAKVYGMPPLGAPPMSVPHLDTRVINGKSWLLFGPFAGWSPKFLKQGKVTDLPFSVKPNNLASMLGVGLTEMGLLKYLIGQLLLSEADRVETLRNFAPSARDSDWELDIAGQRVQVIRRKGKGGVLEFGTTVLAAKDGSIAGLLGASPGASTAVPAMLDVMERCFGDRYTAWLPKLKEIVPSLGTKLSDEPKLFQEIWAHGTKVLKLDHPAAGLPVAGTDTEHREPATTVTA.

Belongs to the MQO family. Requires FAD as cofactor.

The enzyme catalyses (S)-malate + a quinone = a quinol + oxaloacetate. The protein operates within carbohydrate metabolism; tricarboxylic acid cycle; oxaloacetate from (S)-malate (quinone route): step 1/1. The polypeptide is Probable malate:quinone oxidoreductase (Mycobacterium sp. (strain MCS)).